Reading from the N-terminus, the 379-residue chain is Queuine tRNA-ribosyltransferase (379 aa).

The Proton acceptor role is filled by Asp94. Substrate is bound by residues 94–98 (DSGGF), Asp148, Gln191, and Gly218. The segment at 249–255 (GVGSPDS) is RNA binding. Asp268 functions as the Nucleophile in the catalytic mechanism. The RNA binding; important for wobble base 34 recognition stretch occupies residues 273–277 (TRIAR). 4 residues coordinate Zn(2+): Cys306, Cys308, Cys311, and His337.

It belongs to the queuine tRNA-ribosyltransferase family. Homodimer. Within each dimer, one monomer is responsible for RNA recognition and catalysis, while the other monomer binds to the replacement base PreQ1. The cofactor is Zn(2+).

It carries out the reaction 7-aminomethyl-7-carbaguanine + guanosine(34) in tRNA = 7-aminomethyl-7-carbaguanosine(34) in tRNA + guanine. Its pathway is tRNA modification; tRNA-queuosine biosynthesis. In terms of biological role, catalyzes the base-exchange of a guanine (G) residue with the queuine precursor 7-aminomethyl-7-deazaguanine (PreQ1) at position 34 (anticodon wobble position) in tRNAs with GU(N) anticodons (tRNA-Asp, -Asn, -His and -Tyr). Catalysis occurs through a double-displacement mechanism. The nucleophile active site attacks the C1' of nucleotide 34 to detach the guanine base from the RNA, forming a covalent enzyme-RNA intermediate. The proton acceptor active site deprotonates the incoming PreQ1, allowing a nucleophilic attack on the C1' of the ribose to form the product. After dissociation, two additional enzymatic reactions on the tRNA convert PreQ1 to queuine (Q), resulting in the hypermodified nucleoside queuosine (7-(((4,5-cis-dihydroxy-2-cyclopenten-1-yl)amino)methyl)-7-deazaguanosine). In Listeria welshimeri serovar 6b (strain ATCC 35897 / DSM 20650 / CCUG 15529 / CIP 8149 / NCTC 11857 / SLCC 5334 / V8), this protein is Queuine tRNA-ribosyltransferase.